The sequence spans 1003 residues: Translation initiation factor IF-2 (1003 aa).

Basic and acidic residues-rich tracts occupy residues 61–74 (EKFS…DRNK), 139–169 (PVVE…KKPE), 180–206 (LEEK…KETP), 219–229 (VFKIRPTEFKS), and 252–290 (SKEE…DKIS). Disordered regions lie at residues 61–81 (EKFS…SIEG) and 135–362 (PKAE…KDRF). The segment covering 315–350 (NAAGTTNAGGASNNNQRNDNANRPNRNNNSKPNGNN) has biased composition (low complexity). Positions 502–672 (PRAPIVTVMG…LLEAEMLDLK (171 aa)) constitute a tr-type G domain. The interval 511–518 (GHVDHGKT) is G1. 511-518 (GHVDHGKT) serves as a coordination point for GTP. Positions 536–540 (GITQH) are G2. The segment at 558 to 561 (DTPG) is G3. GTP is bound by residues 558-562 (DTPGH) and 612-615 (NKVD). Positions 612 to 615 (NKVD) are G4. Residues 648–650 (SAK) form a G5 region.

Belongs to the TRAFAC class translation factor GTPase superfamily. Classic translation factor GTPase family. IF-2 subfamily.

Its subcellular location is the cytoplasm. Functionally, one of the essential components for the initiation of protein synthesis. Protects formylmethionyl-tRNA from spontaneous hydrolysis and promotes its binding to the 30S ribosomal subunits. Also involved in the hydrolysis of GTP during the formation of the 70S ribosomal complex. This Phocaeicola vulgatus (strain ATCC 8482 / DSM 1447 / JCM 5826 / CCUG 4940 / NBRC 14291 / NCTC 11154) (Bacteroides vulgatus) protein is Translation initiation factor IF-2.